We begin with the raw amino-acid sequence, 156 residues long: Snaclec A12 (156 aa).

Positions 1–23 are cleaved as a signal peptide; it reads MGRSISVSFGLLVVFLSLSGTGA. Cystine bridges form between Cys27–Cys38, Cys55–Cys148, and Cys123–Cys140. A C-type lectin domain is found at 34 to 149; that stretch reads YEGHCYKVFN…CELAYHFICM (116 aa).

The protein belongs to the snaclec family. Heterodimer; disulfide-linked. As to expression, expressed by the venom gland.

The protein resides in the secreted. Functionally, interferes with one step of hemostasis (modulation of platelet aggregation, or coagulation cascade, for example). The sequence is that of Snaclec A12 from Macrovipera lebetinus (Levantine viper).